The sequence spans 437 residues: Enolase (437 aa).

Residue glutamine 162 participates in (2R)-2-phosphoglycerate binding. The Proton donor role is filled by glutamate 204. Mg(2+)-binding residues include aspartate 251, glutamate 297, and aspartate 324. Residues lysine 349, arginine 378, serine 379, and lysine 400 each contribute to the (2R)-2-phosphoglycerate site. The Proton acceptor role is filled by lysine 349.

The protein belongs to the enolase family. Requires Mg(2+) as cofactor.

It localises to the cytoplasm. Its subcellular location is the secreted. The protein localises to the cell surface. The enzyme catalyses (2R)-2-phosphoglycerate = phosphoenolpyruvate + H2O. It participates in carbohydrate degradation; glycolysis; pyruvate from D-glyceraldehyde 3-phosphate: step 4/5. Catalyzes the reversible conversion of 2-phosphoglycerate (2-PG) into phosphoenolpyruvate (PEP). It is essential for the degradation of carbohydrates via glycolysis. The polypeptide is Enolase (Pelodictyon phaeoclathratiforme (strain DSM 5477 / BU-1)).